The following is a 128-amino-acid chain: Large ribosomal subunit protein bL17 (128 aa).

It belongs to the bacterial ribosomal protein bL17 family. In terms of assembly, part of the 50S ribosomal subunit. Contacts protein L32.

This chain is Large ribosomal subunit protein bL17, found in Streptococcus pyogenes serotype M49 (strain NZ131).